Reading from the N-terminus, the 247-residue chain is Caffeoyl-CoA O-methyltransferase 1 (247 aa).

K21 contributes to the substrate binding site. S-adenosyl-L-methionine contacts are provided by residues T63, E85, 87–88, S93, D111, and A140; that span reads GV. D163 is a binding site for substrate. An a divalent metal cation-binding site is contributed by D163. D165 lines the S-adenosyl-L-methionine pocket. Residues D189 and N190 each coordinate a divalent metal cation. Substrate is bound at residue N194.

This sequence belongs to the class I-like SAM-binding methyltransferase superfamily. Cation-dependent O-methyltransferase family. CCoAMT subfamily. Requires a divalent metal cation as cofactor.

The catalysed reaction is (E)-caffeoyl-CoA + S-adenosyl-L-methionine = (E)-feruloyl-CoA + S-adenosyl-L-homocysteine + H(+). It participates in aromatic compound metabolism; phenylpropanoid biosynthesis. Functionally, methylates caffeoyl-CoA to feruloyl-CoA and 5-hydroxyferuloyl-CoA to sinapoyl-CoA. Plays a role in the synthesis of feruloylated polysaccharides. Involved in the reinforcement of the plant cell wall. Also involved in the responding to wounding or pathogen challenge by the increased formation of cell wall-bound ferulic acid polymers. This chain is Caffeoyl-CoA O-methyltransferase 1 (CCOAOMT1), found in Populus trichocarpa (Western balsam poplar).